Here is a 151-residue protein sequence, read N- to C-terminus: Actin-depolymerizing factor 10 (151 aa).

Residues 15-149 (PAWIEVPEKS…DLEVLRGRAN (135 aa)) form the ADF-H domain.

The protein belongs to the actin-binding proteins ADF family.

Functionally, actin-depolymerizing protein. Severs actin filaments (F-actin) and binds to actin monomers. In Oryza sativa subsp. japonica (Rice), this protein is Actin-depolymerizing factor 10 (ADF10).